The following is a 278-amino-acid chain: Undecaprenyl-diphosphatase (278 aa).

Transmembrane regions (helical) follow at residues 2–22 (ALVE…TEWL), 44–64 (AFME…VVLL), 85–105 (IEMW…GLLW), 113–133 (FYNY…FIVI), 150–170 (ITYT…IFPG), 189–209 (TVAA…ASAL), 223–243 (LMIL…SIKF), and 253–273 (FKIF…YFSA).

The protein belongs to the UppP family.

Its subcellular location is the cell membrane. The catalysed reaction is di-trans,octa-cis-undecaprenyl diphosphate + H2O = di-trans,octa-cis-undecaprenyl phosphate + phosphate + H(+). In terms of biological role, catalyzes the dephosphorylation of undecaprenyl diphosphate (UPP). Confers resistance to bacitracin. The protein is Undecaprenyl-diphosphatase of Desulfitobacterium hafniense (strain DSM 10664 / DCB-2).